The chain runs to 261 residues: uncharacterized protein (261 aa).

In terms of domain architecture, N-acetyltransferase spans 135-261 (LVLKRIDEDI…VTEYTIYYSG (127 aa)).

This sequence belongs to the acetyltransferase family.

This is an uncharacterized protein from Bacillus subtilis (strain 168).